The chain runs to 129 residues: NADPH-dependent 7-cyano-7-deazaguanine reductase (129 aa).

Cys-42 (thioimide intermediate) is an active-site residue. The Proton donor role is filled by Asp-49. Residues Val-64 to Leu-66 and His-83 to Glu-84 each bind substrate.

It belongs to the GTP cyclohydrolase I family. QueF type 1 subfamily.

The protein localises to the cytoplasm. It carries out the reaction 7-aminomethyl-7-carbaguanine + 2 NADP(+) = 7-cyano-7-deazaguanine + 2 NADPH + 3 H(+). The protein operates within tRNA modification; tRNA-queuosine biosynthesis. In terms of biological role, catalyzes the NADPH-dependent reduction of 7-cyano-7-deazaguanine (preQ0) to 7-aminomethyl-7-deazaguanine (preQ1). The polypeptide is NADPH-dependent 7-cyano-7-deazaguanine reductase (Synechococcus sp. (strain CC9605)).